The primary structure comprises 569 residues: Proline--tRNA ligase (569 aa).

This sequence belongs to the class-II aminoacyl-tRNA synthetase family. ProS type 1 subfamily. Homodimer.

It localises to the cytoplasm. The enzyme catalyses tRNA(Pro) + L-proline + ATP = L-prolyl-tRNA(Pro) + AMP + diphosphate. Functionally, catalyzes the attachment of proline to tRNA(Pro) in a two-step reaction: proline is first activated by ATP to form Pro-AMP and then transferred to the acceptor end of tRNA(Pro). As ProRS can inadvertently accommodate and process non-cognate amino acids such as alanine and cysteine, to avoid such errors it has two additional distinct editing activities against alanine. One activity is designated as 'pretransfer' editing and involves the tRNA(Pro)-independent hydrolysis of activated Ala-AMP. The other activity is designated 'posttransfer' editing and involves deacylation of mischarged Ala-tRNA(Pro). The misacylated Cys-tRNA(Pro) is not edited by ProRS. The protein is Proline--tRNA ligase of Legionella pneumophila (strain Lens).